Consider the following 132-residue polypeptide: Small ribosomal subunit protein uS19 (132 aa).

The protein belongs to the universal ribosomal protein uS19 family.

In terms of biological role, protein S19 forms a complex with S13 that binds strongly to the 16S ribosomal RNA. The chain is Small ribosomal subunit protein uS19 (rps19) from Pyrococcus horikoshii (strain ATCC 700860 / DSM 12428 / JCM 9974 / NBRC 100139 / OT-3).